The chain runs to 213 residues: Peptidyl-prolyl cis-trans isomerase B (213 aa).

Residues 1 to 23 (MAVLRVLCGLLLVSILFLGFVLS) form the signal peptide. The PPIase cyclophilin-type domain maps to 35–197 (FFDIEVDEQP…KSVKIANCGH (163 aa)). Residues 210 to 213 (DAAE) carry the Prevents secretion from ER motif.

The protein belongs to the cyclophilin-type PPIase family. PPIase B subfamily.

The protein resides in the endoplasmic reticulum lumen. The enzyme catalyses [protein]-peptidylproline (omega=180) = [protein]-peptidylproline (omega=0). With respect to regulation, inhibited by cyclosporin A (CsA). Its function is as follows. PPIases accelerate the folding of proteins. It catalyzes the cis-trans isomerization of proline imidic peptide bonds in oligopeptides. This Schistosoma japonicum (Blood fluke) protein is Peptidyl-prolyl cis-trans isomerase B.